A 68-amino-acid polypeptide reads, in one-letter code: Small cysteine-rich protein 2 (68 aa).

Positions 1–24 (MAVKFHLCLLLIILVGMGAHVAFA) are cleaved as a signal peptide.

This sequence belongs to the Cnidaria small cysteine-rich protein (SCRiP) family. gamma subfamily. Post-translationally, contains 4 disulfide bonds.

The protein resides in the secreted. The protein localises to the nematocyst. In terms of biological role, induces neurotoxic symptoms on zebrafish. Has also been claimed to be implied in calcification, but tests on homolog proteins suggest that proteins of this family have a neurotoxic function and not a calcification function. The chain is Small cysteine-rich protein 2 from Orbicella faveolata (Mountainous star coral).